The sequence spans 320 residues: Beta-carotene ketolase (320 aa).

It catalyses the reaction all-trans-beta-carotene + 2 AH2 + 2 O2 = echinenone + 2 A + 3 H2O. It carries out the reaction echinenone + 2 AH2 + 2 O2 = canthaxanthin + 2 A + 3 H2O. Its pathway is carotenoid biosynthesis; astaxanthin biosynthesis. Converts beta-carotene to canthaxanthin via echinenone. This is Beta-carotene ketolase from Haematococcus lacustris (Green alga).